Here is a 2867-residue protein sequence, read N- to C-terminus: Reticulocyte-binding protein 2 (2867 aa).

The N-terminal stretch at 1-21 (MEKNVLWVIFYNFLVILLASC) is a signal peptide. The Extracellular segment spans residues 22-2805 (NDSNRSKSNS…TAKEAIGKTR (2784 aa)). Disordered regions lie at residues 52–73 (KYNN…NNHN), 2650–2682 (ETKT…ASVP), and 2712–2799 (DNTH…TAKE). Low complexity predominate over residues 61–73 (NIGNQINNDNNHN). A compositionally biased stretch (basic and acidic residues) spans 2659 to 2674 (KAKEEKVPPKETENRA). Residues 2725–2736 (DSISAPQEQVEY) show a composition bias toward polar residues. A compositionally biased stretch (acidic residues) spans 2743 to 2754 (ENDETTEEESEH). A compositionally biased stretch (basic and acidic residues) spans 2755–2799 (DDAHDDTHDDTHDDTHDDTHDDTHDDTHDDTHDESQTGRDSTAKE). Tandem repeats lie at residues 2758-2761 (HDDT), 2762-2765 (HDDT), 2766-2769 (HDDT), 2770-2773 (HDDT), 2774-2777 (HDDT), 2778-2781 (HDDT), and 2782-2785 (HDDT). The 7 X 4 AA tandem repeats of H-D-D-T stretch occupies residues 2758–2785 (HDDTHDDTHDDTHDDTHDDTHDDTHDDT). Residues 2806–2826 (LAGAVIIAMSVLSGFIIIVFK) traverse the membrane as a helical segment. Over 2827–2867 (DKDEEEKDHNEHGYNEAFGEHDEYNMHDKEEVIEVCFNEED) the chain is Cytoplasmic.

It is found in the cell membrane. In terms of biological role, involved in reticulocyte adhesion. Specifically binds to human reticulocyte cells. The polypeptide is Reticulocyte-binding protein 2 (RBP-2) (Plasmodium vivax (strain Belem)).